The following is a 353-amino-acid chain: Nicotinate-nucleotide--dimethylbenzimidazole phosphoribosyltransferase (353 aa).

Catalysis depends on glutamate 318, which acts as the Proton acceptor.

This sequence belongs to the CobT family.

The enzyme catalyses 5,6-dimethylbenzimidazole + nicotinate beta-D-ribonucleotide = alpha-ribazole 5'-phosphate + nicotinate + H(+). It functions in the pathway nucleoside biosynthesis; alpha-ribazole biosynthesis; alpha-ribazole from 5,6-dimethylbenzimidazole: step 1/2. Functionally, catalyzes the synthesis of alpha-ribazole-5'-phosphate from nicotinate mononucleotide (NAMN) and 5,6-dimethylbenzimidazole (DMB). This is Nicotinate-nucleotide--dimethylbenzimidazole phosphoribosyltransferase from Chloroflexus aggregans (strain MD-66 / DSM 9485).